The chain runs to 424 residues: Histidine--tRNA ligase (424 aa).

Belongs to the class-II aminoacyl-tRNA synthetase family. As to quaternary structure, homodimer.

It localises to the cytoplasm. The catalysed reaction is tRNA(His) + L-histidine + ATP = L-histidyl-tRNA(His) + AMP + diphosphate + H(+). The chain is Histidine--tRNA ligase from Shewanella piezotolerans (strain WP3 / JCM 13877).